A 99-amino-acid chain; its full sequence is LDVLLGSDDGELAFVPNNFSVPSGEKITFKNNAGFPHNVVFDEDEIPSGVDASKISMDEADLLNAPGETYAVTLTEKGSYSFYCSPHQGAGMVGKVTVN.

Positions 1–99 constitute a Plastocyanin-like domain; it reads LDVLLGSDDG…AGMVGKVTVN (99 aa). Cu cation-binding residues include H37, C84, H87, and M92.

This sequence belongs to the plastocyanin family. Requires Cu(2+) as cofactor.

Its subcellular location is the plastid. The protein resides in the chloroplast thylakoid membrane. Participates in electron transfer between P700 and the cytochrome b6-f complex in photosystem I. In Mercurialis perennis (Dog's mercury), this protein is Plastocyanin (PETE).